The primary structure comprises 108 residues: UPF0060 membrane protein Mvan_3406 (108 aa).

Helical transmembrane passes span leucine 7 to valine 27, glycine 32 to phenylalanine 52, valine 61 to aspartate 81, and arginine 87 to proline 107.

Belongs to the UPF0060 family.

The protein resides in the cell membrane. This Mycolicibacterium vanbaalenii (strain DSM 7251 / JCM 13017 / BCRC 16820 / KCTC 9966 / NRRL B-24157 / PYR-1) (Mycobacterium vanbaalenii) protein is UPF0060 membrane protein Mvan_3406.